The sequence spans 484 residues: Glutamate--tRNA ligase (484 aa).

A 'HIGH' region motif is present at residues 11–21 (PSPTGYLHIGN). Positions 252–256 (KLSKR) match the 'KMSKS' region motif. K255 contacts ATP.

Belongs to the class-I aminoacyl-tRNA synthetase family. Glutamate--tRNA ligase type 1 subfamily. In terms of assembly, monomer.

It localises to the cytoplasm. It catalyses the reaction tRNA(Glu) + L-glutamate + ATP = L-glutamyl-tRNA(Glu) + AMP + diphosphate. Functionally, catalyzes the attachment of glutamate to tRNA(Glu) in a two-step reaction: glutamate is first activated by ATP to form Glu-AMP and then transferred to the acceptor end of tRNA(Glu). The sequence is that of Glutamate--tRNA ligase from Staphylococcus haemolyticus (strain JCSC1435).